Reading from the N-terminus, the 190-residue chain is Small ribosomal subunit protein uS7 (190 aa).

An N-acetylthreonine modification is found at threonine 2.

The protein belongs to the universal ribosomal protein uS7 family. As to quaternary structure, component of the small ribosomal subunit. Part of the small subunit (SSU) processome, composed of more than 70 proteins and the RNA chaperone small nucleolar RNA (snoRNA) U3.

The protein resides in the cytoplasm. It is found in the nucleus. It localises to the nucleolus. Functionally, component of the small ribosomal subunit. The ribosome is a large ribonucleoprotein complex responsible for the synthesis of proteins in the cell. Part of the small subunit (SSU) processome, first precursor of the small eukaryotic ribosomal subunit. During the assembly of the SSU processome in the nucleolus, many ribosome biogenesis factors, an RNA chaperone and ribosomal proteins associate with the nascent pre-rRNA and work in concert to generate RNA folding, modifications, rearrangements and cleavage as well as targeted degradation of pre-ribosomal RNA by the RNA exosome. The protein is Small ribosomal subunit protein uS7 (rps5) of Dictyostelium discoideum (Social amoeba).